We begin with the raw amino-acid sequence, 252 residues long: Probable transcriptional regulatory protein TW504 (252 aa).

Belongs to the TACO1 family.

The protein localises to the cytoplasm. This chain is Probable transcriptional regulatory protein TW504, found in Tropheryma whipplei (strain TW08/27) (Whipple's bacillus).